The chain runs to 216 residues: Soluble inorganic pyrophosphatase 4 (216 aa).

S18 bears the Phosphoserine mark. The substrate site is built by K66 and R80. Catalysis depends on Y88, which acts as the Proton donor. Y92 lines the substrate pocket. Mg(2+) contacts are provided by D102, D107, and D139. Residue Y176 coordinates substrate.

It belongs to the PPase family. Monomer. It depends on Mg(2+) as a cofactor. Ubiquitous, excepted in pollen. Very low expression in cork, xylem and hypocotyls.

The protein localises to the cytoplasm. It catalyses the reaction diphosphate + H2O = 2 phosphate + H(+). Inhibited by Zn(2+), Ca(2+), Ba(2+), Fe(2+), Co(2+), Cu(2+), Eu(2+), Eu(3+) and Mn(2+). In terms of biological role, catalyzes the irreversible hydrolysis of pyrophosphate (PPi) to phosphate. The MgPPi(2-) complex binds to the enzyme only after a free Mg(2+) ion has bound. No activity with glycerol-3-phosphate, glucose-6-phosphate, p-nitrophenylphosphate, ADP, NADP(+), NAD(+),NADH, NADPH or phosphoribosyl pyrophosphate as substrates. This Arabidopsis thaliana (Mouse-ear cress) protein is Soluble inorganic pyrophosphatase 4.